The chain runs to 2415 residues: Spectrin alpha chain, erythrocytic 1 (2415 aa).

Spectrin repeat units lie at residues 52–152 (YHYQ…SDVL), 157–259 (KFYQ…ESLS), 263–365 (DLQR…AKLK), 370–471 (YHRF…HQYR), 475–576 (DFHL…RKLL), 580–681 (QLLQ…GTQL), 686–787 (QLLQ…KKKL), 792–894 (KLQQ…NDLK), and 898–967 (QLQQ…QQQQ). Residue Ser257 is modified to Phosphoserine. The SH3 domain occupies 975–1034 (GREARVIALYDFEARSRREVSMKKNDVLTLLSSINKDWWKVEADDHQGFVPAVYVRKLAP). At Ser990 the chain carries Phosphoserine. Spectrin repeat units lie at residues 1085 to 1177 (LAYE…YQLL), 1183 to 1285 (VEMF…SLNE), 1287 to 1390 (HKFF…KMLD), 1394 to 1489 (ELQL…QLLT), 1499 to 1603 (DLKQ…KLNE), 1606 to 1709 (RQQR…KLKE), 1712 to 1815 (ALFQ…NLEE), 1818 to 1921 (EYLQ…SQLD), 1924 to 2029 (HAFQ…KLLE), 2040 to 2142 (LFME…QELQ), and 2154 to 2254 (MCQE…NLEQ). Ser1972 is subject to Phosphoserine. EF-hand domains lie at 2267–2302 (ETLKEFSTTYKHFDENLTGRLTHKEFRSCLRGLNYY), 2310–2345 (EPEPKFEKFLNAVDPGRKGYVSLEDYTSFLIDKESE), and 2347–2382 (IKTSDDIESAFQALAEGKAYITKEDMKQALTPEQVS). The Ca(2+) site is built by Asp2280, Asn2282, Thr2284, Arg2286, Glu2291, Asp2323, Tyr2329, and Asp2334.

This sequence belongs to the spectrin family. As to quaternary structure, composed of non-homologous chains, alpha and beta, which aggregate to form dimers, tetramers, and higher polymers. Interacts with FASLG. Interacts with BCAM.

The protein resides in the cytoplasm. Its subcellular location is the cytoskeleton. It is found in the cell cortex. Functionally, spectrin is the major constituent of the cytoskeletal network underlying the erythrocyte plasma membrane. It associates with band 4.1 and actin to form the cytoskeletal superstructure of the erythrocyte plasma membrane. This chain is Spectrin alpha chain, erythrocytic 1 (Spta1), found in Mus musculus (Mouse).